A 433-amino-acid polypeptide reads, in one-letter code: Arabinooligosaccharide-binding protein (433 aa).

An N-terminal signal peptide occupies residues 1–21; the sequence is MKKMTVCFLVLMMLLTLVIAG. Cys22 carries N-palmitoyl cysteine lipidation. Cys22 carries the S-diacylglycerol cysteine lipid modification.

The protein belongs to the bacterial solute-binding protein 1 family. In terms of assembly, the complex is composed of two ATP-binding proteins (MsmX), two transmembrane proteins (AraP and AraQ) and a solute-binding protein (AraN).

The protein resides in the cell membrane. Functionally, part of the ABC transporter complex AraNPQ involved in the uptake of arabinooligosaccharides. Transports alpha-1,5-arabinooligosaccharides, at least up to four L-arabinosyl units. AraN captures the substrate and delivers it to the two transmembrane components. This Bacillus subtilis (strain 168) protein is Arabinooligosaccharide-binding protein.